The chain runs to 275 residues: uncharacterized protein (275 aa).

2 disordered regions span residues 1-25 and 185-275; these read MIGG…DQEQ and QRGE…RHHM. Positions 228-239 are enriched in basic and acidic residues; the sequence is KPGDGEENAKDD.

This is an uncharacterized protein from Neurospora crassa (strain ATCC 24698 / 74-OR23-1A / CBS 708.71 / DSM 1257 / FGSC 987).